We begin with the raw amino-acid sequence, 234 residues long: DNA repair protein RecO (234 aa).

Belongs to the RecO family.

In terms of biological role, involved in DNA repair and RecF pathway recombination. The polypeptide is DNA repair protein RecO (Alteromonas mediterranea (strain DSM 17117 / CIP 110805 / LMG 28347 / Deep ecotype)).